We begin with the raw amino-acid sequence, 654 residues long: Fructose-1,6-bisphosphatase class 3 (654 aa).

It belongs to the FBPase class 3 family. It depends on Mn(2+) as a cofactor.

The catalysed reaction is beta-D-fructose 1,6-bisphosphate + H2O = beta-D-fructose 6-phosphate + phosphate. The protein operates within carbohydrate biosynthesis; gluconeogenesis. The chain is Fructose-1,6-bisphosphatase class 3 from Staphylococcus haemolyticus (strain JCSC1435).